Consider the following 150-residue polypeptide: Transcription antitermination protein NusB (150 aa).

This sequence belongs to the NusB family.

In terms of biological role, involved in transcription antitermination. Required for transcription of ribosomal RNA (rRNA) genes. Binds specifically to the boxA antiterminator sequence of the ribosomal RNA (rrn) operons. The sequence is that of Transcription antitermination protein NusB from Chloroflexus aggregans (strain MD-66 / DSM 9485).